A 316-amino-acid chain; its full sequence is Acetyl-coenzyme A carboxylase carboxyl transferase subunit alpha (316 aa).

The 254-residue stretch at 40–293 folds into the CoA carboxyltransferase C-terminal domain; sequence LERRSKDALR…GETIENGFRE (254 aa).

The protein belongs to the AccA family. As to quaternary structure, acetyl-CoA carboxylase is a heterohexamer composed of biotin carboxyl carrier protein (AccB), biotin carboxylase (AccC) and two subunits each of ACCase subunit alpha (AccA) and ACCase subunit beta (AccD).

It localises to the cytoplasm. It catalyses the reaction N(6)-carboxybiotinyl-L-lysyl-[protein] + acetyl-CoA = N(6)-biotinyl-L-lysyl-[protein] + malonyl-CoA. It functions in the pathway lipid metabolism; malonyl-CoA biosynthesis; malonyl-CoA from acetyl-CoA: step 1/1. Functionally, component of the acetyl coenzyme A carboxylase (ACC) complex. First, biotin carboxylase catalyzes the carboxylation of biotin on its carrier protein (BCCP) and then the CO(2) group is transferred by the carboxyltransferase to acetyl-CoA to form malonyl-CoA. The protein is Acetyl-coenzyme A carboxylase carboxyl transferase subunit alpha of Chelativorans sp. (strain BNC1).